Here is a 314-residue protein sequence, read N- to C-terminus: Tudor-interacting repair regulator protein (314 aa).

The N-myristoyl glycine moiety is linked to residue Gly-2.

It belongs to the Nudix hydrolase family. TIRR subfamily. As to quaternary structure, interacts (via the cytoplasmic part) with syndecan-4 (SDC4), but not with other syndecan proteins. In terms of processing, myristoylated in vitro; additional evidence is however required to confirm myristoylation in vivo. As to expression, ubiquitously expressed. Expressed in embryonic brain, eyes, gizzard, heart, intestine, kidney, liver, tibia and skin.

It localises to the nucleus. Its subcellular location is the cytoplasm. The protein resides in the cytoskeleton. It is found in the cell membrane. The protein localises to the cell junction. It localises to the focal adhesion. Its function is as follows. Key regulator of TP53BP1 required to stabilize TP53BP1 and regulate its recruitment to chromatin. The protein is Tudor-interacting repair regulator protein (NUDT16L1) of Gallus gallus (Chicken).